A 44-amino-acid chain; its full sequence is Viresin (44 aa).

Belongs to the insect A10/OS-D protein family.

It is found in the secreted. Functionally, has antibacterial activity against the Gram-negative bacteria E.coli and E.cloacae, but not against the Gram-negative bacteria P.aeruginosa, P.vulgaris, K.pneumoniae and S.enteritidis or the Gram-positive bacteria S.aureus, S.epidermidis and S.salivarius. In Heliothis virescens (Tobacco budworm moth), this protein is Viresin.